The following is a 1026-amino-acid chain: Maternal effect protein staufen (1026 aa).

Residues 16 to 29 (AAHHHSHSHAHMHL) show a composition bias toward basic residues. 3 disordered regions span residues 16–159 (AAHH…QLPP), 190–210 (NHYGSNANSNSGSNNSNSNYA), and 234–311 (TPVP…KDKT). Positions 70 to 111 (AQQQQQQQTSSNQAGAVAAAGAAYHHGNINSNSGSNISSNSN) are enriched in low complexity. Positions 112–126 (QMQKIRQQHQHLSSS) are enriched in polar residues. 2 stretches are compositionally biased toward low complexity: residues 192–210 (YGSNANSNSGSNNSNSNYA) and 234–256 (TPVPEPPVTTNNATTNSTSNSTV). The segment covering 267-284 (TSQKPETRQEPASADDHV) has biased composition (basic and acidic residues). Over residues 285–303 (STGNIDATGALSNEDTSSS) the composition is skewed to polar residues. DRBM domains lie at 311 to 378 (TPMC…ETMY) and 490 to 557 (PKFP…VLKT). Residues Ser563 and Ser570 each carry the phosphoserine modification. In terms of domain architecture, DRBM 3 spans 578–645 (SPISQVHEIG…AEKMLVELQK (68 aa)). Residues His606, Lys608, Lys628, Lys629, and Lys632 each coordinate RNA. The tract at residues 647–707 (PPLTPTKQTP…PPKDKLIDMD (61 aa)) is disordered. Phosphothreonine is present on residues Thr650 and Thr655. At Ser676 the chain carries Phosphoserine. Polar residues predominate over residues 678 to 688 (VSGTDGPTQTG). Residues 711 to 781 (NPITKLIQLQ…AQALFELLEA (71 aa)) enclose the DRBM 4 domain. The interval 855–948 (ESKEEEANKE…SNSTSNTQSA (94 aa)) is disordered. Over residues 864–890 (EVAVAAEENSNNSANSGDSSNSSSGDS) the composition is skewed to low complexity. Residues 891 to 901 (QATEAASESAL) are compositionally biased toward polar residues. Low complexity-rich tracts occupy residues 902–920 (NTSTGSNTSGVSSNSSNVG) and 934–947 (NTESSSNSTSNTQS). A DRBM 5 domain is found at 951 to 1018 (HMKEQLLYLS…ASNALKILSK (68 aa)).

In terms of assembly, component of neuronal ribonucleoprotein complexes (RNPs) that contains at least various translational repressor and mRNA turnover proteins such as me31B, tral, Upf1, AGO2 and sometimes Fmr1. In terms of tissue distribution, polar granules at the posterior pole of the oocyte, and by the time the egg is laid, at the anterior pole.

The protein resides in the cytoplasm. It localises to the cytoplasmic ribonucleoprotein granule. Its function is as follows. RNA-binding protein which forms ribonucleoprotein complexes (RNPs) that play critical roles in the localization, translational repression and turnover of RNAs during embryogenesis, neurotransmission and neurogenesis. In the oocyte, essential for the localization of both the osk/oskar mRNA to the posterior pole and bcd/bicoid RNA to the anterior pole, and is therefore required for the correct anterior-posterior patterning of the developing embryo. Association with osk or bcd at their respective poles, appears to promote the formation and stabilization of the ribonucleoprotein complexes. Integral component of diverse neuritic ribonucleoprotein complexes (RNPs) that mediate the transport, translation and turnover of neuronal RNAs during neuorgenesis and the translation repression of synaptic transcripts in preparation for their dendritic targeting. The sequence is that of Maternal effect protein staufen (stau) from Drosophila melanogaster (Fruit fly).